The chain runs to 132 residues: DNA-directed RNA polymerase subunit omega (132 aa).

Positions 89–109 are disordered; the sequence is HSSESESIFNTSSQEEGTSFD. The segment covering 96–105 has biased composition (polar residues); it reads IFNTSSQEEG.

It belongs to the RNA polymerase subunit omega family. In terms of assembly, the RNAP catalytic core consists of 2 alpha, 1 beta, 1 beta' and 1 omega subunit. When a sigma factor is associated with the core the holoenzyme is formed, which can initiate transcription.

The enzyme catalyses RNA(n) + a ribonucleoside 5'-triphosphate = RNA(n+1) + diphosphate. Functionally, promotes RNA polymerase assembly. Latches the N- and C-terminal regions of the beta' subunit thereby facilitating its interaction with the beta and alpha subunits. The protein is DNA-directed RNA polymerase subunit omega of Bartonella tribocorum (strain CIP 105476 / IBS 506).